Here is a 463-residue protein sequence, read N- to C-terminus: Adenosylhomocysteinase (463 aa).

Substrate is bound by residues Thr-54, Asp-128, and Glu-189. 190–192 (TTT) lines the NAD(+) pocket. Positions 219 and 223 each coordinate substrate. Residues Asn-224, 253 to 258 (GYGDVG), Glu-276, Asn-311, 332 to 334 (IGH), and Asn-377 each bind NAD(+).

The protein belongs to the adenosylhomocysteinase family. Homotetramer. NAD(+) is required as a cofactor.

It localises to the cytoplasm. It carries out the reaction S-adenosyl-L-homocysteine + H2O = L-homocysteine + adenosine. The protein operates within amino-acid biosynthesis; L-homocysteine biosynthesis; L-homocysteine from S-adenosyl-L-homocysteine: step 1/1. May play a key role in the regulation of the intracellular concentration of adenosylhomocysteine. The polypeptide is Adenosylhomocysteinase (Rhodobacter capsulatus (strain ATCC BAA-309 / NBRC 16581 / SB1003)).